The chain runs to 70 residues: Peptide Hp1035 (70 aa).

The first 23 residues, 1–23, serve as a signal peptide directing secretion; it reads MKTQFVILLVALVLFQMFAQSEA. Phenylalanine 36 is modified (phenylalanine amide). Residues 40 to 70 constitute a propeptide that is removed on maturation; sequence GLQDLDMDDLDQLFDGEISQADINFLNQLMR.

It belongs to the non-disulfide-bridged peptide (NDBP) superfamily. Short antimicrobial peptide (group 4) family. Expressed by the venom gland.

The protein resides in the secreted. Its subcellular location is the target cell membrane. Its function is as follows. Amphipathic peptide with antimicrobial activity. In Heterometrus petersii (Asian forest scorpion), this protein is Peptide Hp1035.